Reading from the N-terminus, the 183-residue chain is Adenine phosphoribosyltransferase (183 aa).

This sequence belongs to the purine/pyrimidine phosphoribosyltransferase family. In terms of assembly, homodimer.

It is found in the cytoplasm. It carries out the reaction AMP + diphosphate = 5-phospho-alpha-D-ribose 1-diphosphate + adenine. The protein operates within purine metabolism; AMP biosynthesis via salvage pathway; AMP from adenine: step 1/1. Its function is as follows. Catalyzes a salvage reaction resulting in the formation of AMP, that is energically less costly than de novo synthesis. This Salmonella typhi protein is Adenine phosphoribosyltransferase.